We begin with the raw amino-acid sequence, 111 residues long: Cell cycle protein GpsB (111 aa).

Positions 38–72 (IKDYEAFHKEFEQLKQQNARLKRELEEQKLAVTQV) form a coiled coil.

It belongs to the GpsB family. In terms of assembly, forms polymers through the coiled coil domains. Interacts with PBP1, MreC and EzrA.

The protein localises to the cytoplasm. Its function is as follows. Divisome component that associates with the complex late in its assembly, after the Z-ring is formed, and is dependent on DivIC and PBP2B for its recruitment to the divisome. Together with EzrA, is a key component of the system that regulates PBP1 localization during cell cycle progression. Its main role could be the removal of PBP1 from the cell pole after pole maturation is completed. Also contributes to the recruitment of PBP1 to the division complex. Not essential for septum formation. The polypeptide is Cell cycle protein GpsB (Bacillus cereus (strain G9842)).